Here is a 249-residue protein sequence, read N- to C-terminus: Transmembrane protein 106C (249 aa).

Positions 1 to 26 are disordered; that stretch reads MGSRHSTYAHRPFSKRRKADDTEDSL. The N-myristoyl glycine moiety is linked to residue glycine 2. 2 consecutive transmembrane segments (helical) span residues 86–106 and 197–217; these read YVLLSILLCLLASGLVVFFLF and SYVYFFCTLPYIGVHNVVVFV.

It belongs to the TMEM106 family. As to quaternary structure, interacts with TMEM106B.

Its subcellular location is the endoplasmic reticulum membrane. The protein resides in the membrane. The polypeptide is Transmembrane protein 106C (TMEM106C) (Bos taurus (Bovine)).